The chain runs to 352 residues: Schlafen-like protein 4 (352 aa).

The SLFN-like fold stretch occupies residues 87–235; that stretch reads FEYQSNFSEV…SDKVYQISSG (149 aa). A helical transmembrane segment spans residues 326-343; the sequence is IQNIGWIFFGTALSCCIY.

It belongs to the Schlafen family. As to quaternary structure, component of the PUCH (precursor of 21U RNA 5'-end cleavage holoenzyme) complex; consisting of tofu-1, tofu-2 and either slfl-3 or slfl-4.

It localises to the membrane. Its function is as follows. Component of the trimeric PUCH (precursor of 21U RNA 5'-end cleavage holoenzyme) complex, that acts as an endoribonuclease processing the 5'-end of precursor Piwi-interacting RNAs (piRNAs). The PUCH complex consists of tofu-1, tofu-2 and either slfl-3 or slfl-4, where tofu-2 exhibits endoribonuclease activity. PUCH-mediated processing strictly requires a 7-methyl-G cap (m7 G-cap) and an uracil at position three (U3). PUCH also exhibits a strict bias for piRNA precursors with an A or G at position 1. Mature piRNA production is enhanced by the interaction of PUCH with the PETISCO complex, which is stabilizing piRNA precursors and allows their processing by PUCH. The sequence is that of Schlafen-like protein 4 from Caenorhabditis elegans.